The sequence spans 259 residues: Deoxyribose-phosphate aldolase (259 aa).

Residue aspartate 102 is the Proton donor/acceptor of the active site. The Schiff-base intermediate with acetaldehyde role is filled by lysine 166. Residue lysine 200 is the Proton donor/acceptor of the active site.

It belongs to the DeoC/FbaB aldolase family. DeoC type 2 subfamily.

It is found in the cytoplasm. It catalyses the reaction 2-deoxy-D-ribose 5-phosphate = D-glyceraldehyde 3-phosphate + acetaldehyde. The protein operates within carbohydrate degradation; 2-deoxy-D-ribose 1-phosphate degradation; D-glyceraldehyde 3-phosphate and acetaldehyde from 2-deoxy-alpha-D-ribose 1-phosphate: step 2/2. Functionally, catalyzes a reversible aldol reaction between acetaldehyde and D-glyceraldehyde 3-phosphate to generate 2-deoxy-D-ribose 5-phosphate. In Vibrio cholerae serotype O1 (strain ATCC 39315 / El Tor Inaba N16961), this protein is Deoxyribose-phosphate aldolase.